The primary structure comprises 92 residues: Putative phosphotransferase enzyme IIB component BB_0367 (92 aa).

The 83-residue stretch at 10-92 (IKVAEHIVEC…ILYMMNEQKQ (83 aa)) folds into the PTS EIIB type-1 domain.

The protein resides in the cytoplasm. The phosphoenolpyruvate-dependent sugar phosphotransferase system (PTS), a major carbohydrate active -transport system, catalyzes the phosphorylation of incoming sugar substrates concomitant with their translocation across the cell membrane. In Borreliella burgdorferi (strain ATCC 35210 / DSM 4680 / CIP 102532 / B31) (Borrelia burgdorferi), this protein is Putative phosphotransferase enzyme IIB component BB_0367.